Here is a 99-residue protein sequence, read N- to C-terminus: Malonate decarboxylase acyl carrier protein (99 aa).

The residue at position 25 (S25) is an O-(phosphoribosyl dephospho-coenzyme A)serine.

This sequence belongs to the MdcC family. Covalently binds the prosthetic group of malonate decarboxylase.

It localises to the cytoplasm. Functionally, subunit of malonate decarboxylase, it is an acyl carrier protein to which acetyl and malonyl thioester residues are bound via a 2'-(5''-phosphoribosyl)-3'-dephospho-CoA prosthetic group and turn over during the catalytic mechanism. In Pseudomonas aeruginosa (strain UCBPP-PA14), this protein is Malonate decarboxylase acyl carrier protein.